Here is a 108-residue protein sequence, read N- to C-terminus: Malonate decarboxylase acyl carrier protein (108 aa).

Residue S35 is modified to O-(phosphoribosyl dephospho-coenzyme A)serine.

This sequence belongs to the MdcC family. In terms of processing, covalently binds the prosthetic group of malonate decarboxylase.

Its subcellular location is the cytoplasm. Its function is as follows. Subunit of malonate decarboxylase, it is an acyl carrier protein to which acetyl and malonyl thioester residues are bound via a 2'-(5''-phosphoribosyl)-3'-dephospho-CoA prosthetic group and turn over during the catalytic mechanism. The polypeptide is Malonate decarboxylase acyl carrier protein (Burkholderia cepacia (Pseudomonas cepacia)).